Here is a 323-residue protein sequence, read N- to C-terminus: Queuosine 5'-phosphate N-glycosylase/hydrolase (323 aa).

Queuosine 5'-phosphate-binding residues include asparagine 72, tyrosine 93, lysine 199, phenylalanine 229, aspartate 231, aspartate 298, tryptophan 302, and glutamine 306. Aspartate 231 functions as the Nucleophile or transition state stabilizer in the catalytic mechanism.

Belongs to the QNG1 protein family. As to quaternary structure, monomer.

It carries out the reaction queuosine 5'-phosphate + H2O = queuine + D-ribose 5-phosphate. Functionally, catalyzes the hydrolysis of queuosine 5'-phosphate, releasing the nucleobase queuine (q). Is likely required for salvage of queuine from exogenous queuosine (Q) that is imported and then converted to queuosine 5'-phosphate intracellularly. In vitro, can also catalyze the release of the q base directly from Q as substrate; however, Q may not be the biologically relevant substrate. Shows a very low activity on queuosine 3',5'-diphosphate, and cannot release q from queuosine 3'-phosphate and from the 5'-nucleotides AMP, UMP, CMP or GMP, indicating specificity for the queuine base. The polypeptide is Queuosine 5'-phosphate N-glycosylase/hydrolase (Sphaerobacter thermophilus (strain ATCC 49802 / DSM 20745 / KCCM 41009 / NCIMB 13125 / S 6022)).